The sequence spans 411 residues: uncharacterized protein (411 aa).

The 180-residue stretch at 20–199 (FLYFDFDAFF…LPITEIPGIG (180 aa)) folds into the UmuC domain.

The protein belongs to the DNA polymerase type-Y family.

This is an uncharacterized protein from Mycoplasma genitalium (strain ATCC 33530 / DSM 19775 / NCTC 10195 / G37) (Mycoplasmoides genitalium).